Here is a 242-residue protein sequence, read N- to C-terminus: Platelet-derived growth factor subunit B (242 aa).

A signal peptide spans 1-20 (MNRCWALFLSLCCYLRLVSA). A propeptide spans 21–81 (EGDPIPEELY…ELESLSRGRR (61 aa)) (removed in mature form). Asn-63 carries an N-linked (GlcNAc...) asparagine glycan. Cystine bridges form between Cys-97-Cys-141, Cys-130-Cys-178, and Cys-134-Cys-180. A compositionally biased stretch (basic residues) spans 219-232 (PPKGKHRKFKHTHD). Positions 219–242 (PPKGKHRKFKHTHDKKALKETLGA) are disordered. Over residues 233 to 242 (KKALKETLGA) the composition is skewed to basic and acidic residues.

The protein belongs to the PDGF/VEGF growth factor family. In terms of assembly, antiparallel homodimer; disulfide-linked. Antiparallel heterodimer with PDGFA; disulfide-linked. The PDGFB homodimer interacts with PDGFRA and PDGFRB homodimers, and with heterodimers formed by PDGFRA and PDGFRB. The heterodimer composed of PDGFA and PDGFB interacts with PDGFRB homodimers, and with heterodimers formed by PDGFRA and PDGFRB. Interacts with XLKD1. Interacts with LRP1. Interacts with SORL1 (via the N-terminal ectodomain). Interacts with CD82; this interaction inhibits PDGFB-mediated signaling pathway.

It is found in the secreted. Functionally, growth factor that plays an essential role in the regulation of embryonic development, cell proliferation, cell migration, survival and chemotaxis. Potent mitogen for cells of mesenchymal origin. Required for normal proliferation and recruitment of pericytes and vascular smooth muscle cells in the central nervous system, skin, lung, heart and placenta. Required for normal blood vessel development, and for normal development of kidney glomeruli. Plays an important role in wound healing. Signaling is modulated by the formation of heterodimers with PDGFA. This is Platelet-derived growth factor subunit B (PDGFB) from Canis lupus familiaris (Dog).